Consider the following 241-residue polypeptide: E3 ubiquitin-protein ligase RNF166 (241 aa).

A disordered region spans residues 8 to 30 (VASSQHRQHHSHQSLATPSSADS). The segment at 37 to 77 (CPICLEVYYKPVAIGSCGHTFCGECLQPCLQVSSPLCPLCR) adopts an RING-type zinc-finger fold. Residues C102, C105, H117, and C121 each coordinate Zn(2+). Residues 102–121 (CRGCSKKVTLAKMRAHISSC) form a C2HC RNF-type zinc finger. The UIM domain occupies 225–241 (DEEAALQAALALSLSEN).

It localises to the cytoplasm. The catalysed reaction is S-ubiquitinyl-[E2 ubiquitin-conjugating enzyme]-L-cysteine + [acceptor protein]-L-lysine = [E2 ubiquitin-conjugating enzyme]-L-cysteine + N(6)-ubiquitinyl-[acceptor protein]-L-lysine.. The protein operates within protein modification; protein ubiquitination. E3 ubiquitin-protein ligase that promotes the ubiquitination of different substrates. The protein is E3 ubiquitin-protein ligase RNF166 (rnf166) of Xenopus laevis (African clawed frog).